The following is a 312-amino-acid chain: MPPAGELRHQSPSKEKLSSVTQSDEAEAASAAISAAAADAEAAGLWTQIKAEARRDAEAEPALASYLYSTILSHSSLERSISFHLGNKLCSSTLLSTLLYDLFLNTFSSDPSLRNATVADLRAARVRDPACISFSHCLLNYKGFLAIQAHRVSHKLWTQSRKPLALALHSRISDVFAVDIHPAAKIGKGILLDHATGVVVGETAVIGNNVSILHHVTLGGTGKACGDRHPKIGDGCLIGAGATILGNVKIGAGAKVGAGSVVLIDVPCRGTAVGNPARLVGGKEKPTIHDEECPGESMDHTSFISEWSDYII.

Over residues 1–17 the composition is skewed to basic and acidic residues; that stretch reads MPPAGELRHQSPSKEKL. The disordered stretch occupies residues 1 to 25; the sequence is MPPAGELRHQSPSKEKLSSVTQSDE.

This sequence belongs to the transferase hexapeptide repeat family. In terms of assembly, homomultimer. In terms of tissue distribution, mostly expressed in stems, flowers and siliques. Localized in vascular tissues, particularly in phloem.

The protein resides in the cytoplasm. The catalysed reaction is L-serine + acetyl-CoA = O-acetyl-L-serine + CoA. Its pathway is amino-acid biosynthesis; L-cysteine biosynthesis; L-cysteine from L-serine: step 1/2. Feedback inhibitions by L-Ser and acetyl-CoA. This is Serine acetyltransferase 5 (SAT5) from Arabidopsis thaliana (Mouse-ear cress).